The sequence spans 247 residues: ATP synthase subunit a, chloroplastic (247 aa).

The next 5 membrane-spanning stretches (helical) occupy residues 38–58, 95–115, 134–154, 199–219, and 220–240; these read QVLI…TLAV, VPFI…GALL, INTT…AGLT, LVVV…VMFL, and GLFT…AYIG.

It belongs to the ATPase A chain family. As to quaternary structure, F-type ATPases have 2 components, CF(1) - the catalytic core - and CF(0) - the membrane proton channel. CF(1) has five subunits: alpha(3), beta(3), gamma(1), delta(1), epsilon(1). CF(0) has four main subunits: a, b, b' and c.

The protein resides in the plastid. It is found in the chloroplast thylakoid membrane. In terms of biological role, key component of the proton channel; it plays a direct role in the translocation of protons across the membrane. In Jasminum nudiflorum (Winter jasmine), this protein is ATP synthase subunit a, chloroplastic.